A 162-amino-acid polypeptide reads, in one-letter code: Sorting nexin-3 (162 aa).

The residue at position 2 (A2) is an N-acetylalanine. Residues 27–151 (NFLEIDVSNP…HMFLQDEIID (125 aa)) form the PX domain. Position 43 is an omega-N-methylarginine (R43). R70, S72, K95, and R118 together coordinate a 1,2-diacyl-sn-glycero-3-phospho-(1D-myo-inositol-3-phosphate). S72 is subject to Phosphoserine. K95 is covalently cross-linked (Glycyl lysine isopeptide (Lys-Gly) (interchain with G-Cter in SUMO2)). The tract at residues 147–162 (DEIIDKSYTPSKIRHA) is binds predominantly to PtdIns(P5) and weaker to PtdIns(P3) abd PtdIns(P4); involved in neurite outgrowth regulation.

The protein belongs to the sorting nexin family. Interacts with VPS26A, VPS29. Interacts with VPS35; the interaction with VPS35 is direct. The association with the retromer CSC subcomplex subunits is proposed to represent a functional distinct retromer variant described as SNX3-retromer complex. Interacts with USP10 and SCNN1A. Interacts with TRFC. Interacts with SNX8; 2 molecules of SNX8 seems to associate with one molecule of SNX3. Interacts with PTPRU. Interacts with MON2 and DOP1B. Ubiquitinated, leading to its proteasomal degradation. Deubiquitinated by USP10. As to expression, highly expressed in developing red cells and hematopoietic tissues.

The protein resides in the early endosome. It localises to the cytoplasmic vesicle. The protein localises to the phagosome. Phosphoinositide-binding protein required for multivesicular body formation. Specifically binds phosphatidylinositol 3-phosphate (PtdIns(P3)). Can also bind phosphatidylinositol 4-phosphate (PtdIns(P4)), phosphatidylinositol 5-phosphate (PtdIns(P5)) and phosphatidylinositol 3,5-biphosphate (PtdIns(3,5)P2). Plays a role in protein transport between cellular compartments. Together with RAB7A facilitates endosome membrane association of the retromer cargo-selective subcomplex (CSC). May act in part as component of the SNX3-retromer complex which mediates the retrograde endosome-to-TGN transport of WLS distinct from the SNX-BAR retromer pathway. Promotes stability and cell surface expression of epithelial sodium channel (ENAC) subunits SCNN1A and SCNN1G. Not involved in EGFR degradation. Involved in the regulation of phagocytosis in dendritic cells possibly by regulating EEA1 recruitment to the nascent phagosomes. Involved in iron homeostasis through regulation of endocytic recycling of the transferrin receptor Tfrc presuambly by delivering the transferrin:transferrin receptor complex to recycling endosomes; the function may involve the CSC retromer subcomplex. Involved in regulation of neurite outgrowth in primary neurons. The chain is Sorting nexin-3 (Snx3) from Mus musculus (Mouse).